A 259-amino-acid polypeptide reads, in one-letter code: Submandibular glandular kallikrein-9 (259 aa).

Residues 1-18 (MWFLILFLALSLGQIDAA) form the signal peptide. The propeptide at 19–24 (PPGQSR) is activation peptide. The 232-residue stretch at 25–256 (VVGGYNCETN…FTSWIKKVMK (232 aa)) folds into the Peptidase S1 domain. 5 cysteine pairs are disulfide-bonded: Cys31–Cys171, Cys48–Cys64, Cys150–Cys217, Cys182–Cys196, and Cys207–Cys232. His63 serves as the catalytic Charge relay system. The N-linked (GlcNAc...) asparagine glycan is linked to Asn106. The Charge relay system role is filled by Asp118. Ser211 serves as the catalytic Charge relay system.

It belongs to the peptidase S1 family. Kallikrein subfamily. Heterodimer of a light chain and heavy chain linked by a disulfide bond.

The enzyme catalyses Preferential cleavage of Arg-|-Xaa bonds in small molecule substrates. Highly selective action to release kallidin (lysyl-bradykinin) from kininogen involves hydrolysis of Met-|-Xaa or Leu-|-Xaa.. Glandular kallikreins cleave Met-Lys and Arg-Ser bonds in kininogen to release Lys-bradykinin. This enzyme has a vasoconstrictor activity. KLK-9 has both a chymotrypsin-like and a trypsin-like properties. The chain is Submandibular glandular kallikrein-9 (Klk9) from Rattus norvegicus (Rat).